The sequence spans 721 residues: BRCA1-A complex subunit RAP80 (721 aa).

Residues 1 to 65 (MPRRKKKGKE…GLQKTKIKQS (65 aa)) are disordered. The interval 1–101 (MPRRKKKGKE…SEQEAREVNS (101 aa)) is necessary for transcriptional repression. K20 participates in a covalent cross-link: Glycyl lysine isopeptide (Lys-Gly) (interchain with G-Cter in SUMO2). S29 carries the phosphoserine modification. K31 participates in a covalent cross-link: Glycyl lysine isopeptide (Lys-Gly) (interchain with G-Cter in SUMO2). A phosphoserine mark is found at S44 and S46. Residues 60–78 (TKIKQSSRAKCLAKRKIAQ) carry the LR motif motif. Glycyl lysine isopeptide (Lys-Gly) (interchain with G-Cter in SUMO2) cross-links involve residues K75 and K90. The 20-residue stretch at 80-99 (TEEEQFALALKMSEQEAREV) folds into the UIM 1 domain. The disordered stretch occupies residues 93 to 204 (EQEAREVNSQ…SVSSGSWDQS (112 aa)). Residues 97–103 (REVNSQE) form a UIM-linker region. The necessary for interaction with NR6A1 N-terminus stretch occupies residues 100 to 200 (NSQEEEEEEL…EEPVSVSSGS (101 aa)). A Phosphoserine modification is found at S101. A UIM 2 domain is found at 105 to 124 (EEEELLRKAIAESLNSCRPS). Positions 117–130 (SLNSCRPSDASATR) are enriched in polar residues. The residue at position 140 (S140) is a Phosphoserine. The span at 194–204 (VSVSSGSWDQS) shows a compositional bias: low complexity. S205 carries the post-translational modification Phosphoserine. Residue K245 forms a Glycyl lysine isopeptide (Lys-Gly) (interchain with G-Cter in SUMO2) linkage. The tract at residues 270 to 400 (TGGTVNYFWG…EEEPTTSHGQ (131 aa)) is AIR. The tract at residues 334 to 369 (NECGQGEQASEKNEGISEDMGDEDKEERQESRASVW) is disordered. Over residues 349–358 (ISEDMGDEDK) the composition is skewed to acidic residues. Residues K382 and K387 each participate in a glycyl lysine isopeptide (Lys-Gly) (interchain with G-Cter in SUMO2) cross-link. Positions 391–418 (EEEPTTSHGQSSQGLFVEETSEEGNSVP) are disordered. Residues 400-500 (QSSQGLFVEE…EIHTSTFSSS (101 aa)) are necessary for interaction with NR6A1 C-terminus. Residues S402 and S420 each carry the phosphoserine modification. K429 participates in a covalent cross-link: Glycyl lysine isopeptide (Lys-Gly) (interchain with G-Cter in SUMO2). At S467 the chain carries Phosphoserine. Residues 502–529 (QVSCPLCDQGFPPTKIERHAMYCNGLMG) form a UBZ4-type zinc finger. Zn(2+) contacts are provided by C505, C508, H520, and C524. The tract at residues 505 to 582 (CPLCDQGFPP…REYQCHVESC (78 aa)) is zinc-finger-like region. Residues K544, K559, K562, and K607 each participate in a glycyl lysine isopeptide (Lys-Gly) (interchain with G-Cter in SUMO2) cross-link. S627 is modified (phosphoserine). Residues K635 and K642 each participate in a glycyl lysine isopeptide (Lys-Gly) (interchain with G-Cter in SUMO2) cross-link. Residues S655 and S679 each carry the phosphoserine modification. Glycyl lysine isopeptide (Lys-Gly) (interchain with G-Cter in SUMO2) cross-links involve residues K698 and K699.

It belongs to the RAP80 family. In terms of assembly, component of the ARISC complex, at least composed of UIMC1/RAP80, ABRAXAS1, BRCC3/BRCC36, BABAM2 and BABAM1/NBA1. Component of the BRCA1-A complex, at least composed of the BRCA1, BARD1, UIMC1/RAP80, ABRAXAS1, BRCC3/BRCC36, BABAM2 and BABAM1/NBA1. In the BRCA1-A complex, interacts directly with ABRAXAS1. Interacts with UBE2I. Interacts with NR6A1. Interacts with ESR1. Interacts with TSP57. Interacts with TRAIP. Sumoylated. In terms of processing, phosphorylated upon DNA damage by ATM or ATR.

It is found in the nucleus. Ubiquitin-binding protein. Specifically recognizes and binds 'Lys-63'-linked ubiquitin. Plays a central role in the BRCA1-A complex by specifically binding 'Lys-63'-linked ubiquitinated histones H2A and H2AX at DNA lesions sites, leading to target the BRCA1-BARD1 heterodimer to sites of DNA damage at double-strand breaks (DSBs). The BRCA1-A complex also possesses deubiquitinase activity that specifically removes 'Lys-63'-linked ubiquitin on histones H2A and H2AX. Also weakly binds monoubiquitin but with much less affinity than 'Lys-63'-linked ubiquitin. May interact with monoubiquitinated histones H2A and H2B; the relevance of such results is however unclear in vivo. Does not bind Lys-48'-linked ubiquitin. May indirectly act as a transcriptional repressor by inhibiting the interaction of NR6A1 with the corepressor NCOR1. The chain is BRCA1-A complex subunit RAP80 (UIMC1) from Sus scrofa (Pig).